Reading from the N-terminus, the 230-residue chain is 5'-methylthioadenosine/S-adenosylhomocysteine nucleosidase (230 aa).

Glu-12 acts as the Proton acceptor in catalysis. Substrate-binding positions include Gly-78, Val-152, and Met-173 to Glu-174. The active-site Proton donor is Asp-197.

Belongs to the PNP/UDP phosphorylase family. MtnN subfamily.

The catalysed reaction is S-adenosyl-L-homocysteine + H2O = S-(5-deoxy-D-ribos-5-yl)-L-homocysteine + adenine. It carries out the reaction S-methyl-5'-thioadenosine + H2O = 5-(methylsulfanyl)-D-ribose + adenine. It catalyses the reaction 5'-deoxyadenosine + H2O = 5-deoxy-D-ribose + adenine. It participates in amino-acid biosynthesis; L-methionine biosynthesis via salvage pathway; S-methyl-5-thio-alpha-D-ribose 1-phosphate from S-methyl-5'-thioadenosine (hydrolase route): step 1/2. Catalyzes the irreversible cleavage of the glycosidic bond in both 5'-methylthioadenosine (MTA) and S-adenosylhomocysteine (SAH/AdoHcy) to adenine and the corresponding thioribose, 5'-methylthioribose and S-ribosylhomocysteine, respectively. Also cleaves 5'-deoxyadenosine, a toxic by-product of radical S-adenosylmethionine (SAM) enzymes, into 5-deoxyribose and adenine. This chain is 5'-methylthioadenosine/S-adenosylhomocysteine nucleosidase, found in Glaesserella parasuis serovar 5 (strain SH0165) (Haemophilus parasuis).